The following is a 727-amino-acid chain: Probable metal-nicotianamine transporter YSL14 (727 aa).

2 stretches are compositionally biased toward low complexity: residues 1–10 (MAQHTAAAAG) and 18–27 (AEAAAAAAAG). The disordered stretch occupies residues 1 to 61 (MAQHTAAAAG…RNGGADDPDA (61 aa)). Over residues 45–54 (AGGGGGGRNG) the composition is skewed to gly residues. Helical transmembrane passes span 84–104 (AFVVSALLAVMFSVIVMKLNL), 107–127 (GIIPSLNVSAGLLGFFFVRLW), 152–172 (CVVSAYGIAFSGGFGSYLFGM), 194–214 (LGWMIGFLFLVSFIGLFALVP), 256–276 (LGKYFLFSFFWGFFQWFYTAG), 314–334 (IVNVSVLLGGILSWGVMWPLI), 359–379 (VFISIALILGDGLYNFLKVLI), 432–452 (VAYGGYVVVAALSIGTLPEIF), 460–480 (ILVAYIVAPVLAFCNAYGSGL), 492–512 (LAIFVFGAWAGLSHGGVLVGL), 546–566 (FISQVIGTGMGCVIAPCVFWL), 604–624 (PENCLTLCYIFFAAAIAINLI), 646–666 (FYIGSYFAIDMFLGSVILFVW), and 681–701 (VASGLICGDGIWTLPQSILAL).

Belongs to the YSL (TC 2.A.67.2) family. Expressed in leaves and at low levels in roots.

It is found in the membrane. In terms of biological role, may be involved in the transport of nicotianamine-chelated metals. The polypeptide is Probable metal-nicotianamine transporter YSL14 (YSL14) (Oryza sativa subsp. japonica (Rice)).